Here is a 281-residue protein sequence, read N- to C-terminus: Bifunctional protein FolD (281 aa).

NADP(+)-binding positions include 161–163, S186, and I227; that span reads GRS.

Belongs to the tetrahydrofolate dehydrogenase/cyclohydrolase family. As to quaternary structure, homodimer.

The enzyme catalyses (6R)-5,10-methylene-5,6,7,8-tetrahydrofolate + NADP(+) = (6R)-5,10-methenyltetrahydrofolate + NADPH. It carries out the reaction (6R)-5,10-methenyltetrahydrofolate + H2O = (6R)-10-formyltetrahydrofolate + H(+). It participates in one-carbon metabolism; tetrahydrofolate interconversion. Its function is as follows. Catalyzes the oxidation of 5,10-methylenetetrahydrofolate to 5,10-methenyltetrahydrofolate and then the hydrolysis of 5,10-methenyltetrahydrofolate to 10-formyltetrahydrofolate. The chain is Bifunctional protein FolD from Brachyspira hyodysenteriae (strain ATCC 49526 / WA1).